The primary structure comprises 1405 residues: DNA-directed RNA polymerase subunit beta' (1405 aa).

Residues cysteine 71, cysteine 73, cysteine 86, and cysteine 89 each contribute to the Zn(2+) site. 3 residues coordinate Mg(2+): aspartate 462, aspartate 464, and aspartate 466. Residues cysteine 810, cysteine 884, cysteine 891, and cysteine 894 each contribute to the Zn(2+) site.

It belongs to the RNA polymerase beta' chain family. As to quaternary structure, the RNAP catalytic core consists of 2 alpha, 1 beta, 1 beta' and 1 omega subunit. When a sigma factor is associated with the core the holoenzyme is formed, which can initiate transcription. The cofactor is Mg(2+). Zn(2+) is required as a cofactor.

It carries out the reaction RNA(n) + a ribonucleoside 5'-triphosphate = RNA(n+1) + diphosphate. Functionally, DNA-dependent RNA polymerase catalyzes the transcription of DNA into RNA using the four ribonucleoside triphosphates as substrates. This Maricaulis maris (strain MCS10) (Caulobacter maris) protein is DNA-directed RNA polymerase subunit beta'.